Here is a 325-residue protein sequence, read N- to C-terminus: Mitochondrial amidoxime-reducing component 1 (325 aa).

Topologically, residues 1–16 (MDLKEAFATIFDQNRK) are mitochondrial matrix. Residues 17–36 (VALYAAGTTVAVLGLGLVFK) traverse the membrane as a helical; Signal-anchor for type II membrane protein segment. Topologically, residues 37–325 (YMRREEKLTR…VGEPVYKITY (289 aa)) are cytoplasmic. Residues Lys-59, Ser-60, and Arg-84 each coordinate Mo-molybdopterin. The interval 85-175 (HWLVITEDGH…ADKPVRLVHY (91 aa)) is MOSC N-terminal region. Residues 179–323 (LKPQRPHEKE…LHVGEPVYKI (145 aa)) enclose the MOSC domain. Mo-molybdopterin contacts are provided by Arg-230, Arg-264, Cys-265, and Tyr-305.

The cofactor is Mo-molybdopterin.

Its subcellular location is the mitochondrion outer membrane. It is found in the membrane. The enzyme catalyses N(omega)-hydroxy-L-arginine + 2 Fe(II)-[cytochrome b5] + 2 H(+) = L-arginine + 2 Fe(III)-[cytochrome b5] + H2O. In terms of biological role, catalyzes the reduction of N-oxygenated molecules, acting as a counterpart of cytochrome P450 and flavin-containing monooxygenases in metabolic cycles. As a component of prodrug-converting system, reduces a multitude of N-hydroxylated prodrugs particularly amidoximes, leading to increased drug bioavailability. May be involved in mitochondrial N(omega)-hydroxy-L-arginine (NOHA) reduction, regulating endogenous nitric oxide levels and biosynthesis. Postulated to cleave the N-OH bond of N-hydroxylated substrates in concert with electron transfer from NADH to cytochrome b5 reductase then to cytochrome b5, the ultimate electron donor that primes the active site for substrate reduction. This is Mitochondrial amidoxime-reducing component 1 (mtarc1) from Danio rerio (Zebrafish).